A 704-amino-acid chain; its full sequence is Elongation factor G (704 aa).

The region spanning 8-290 (EKYRNIGICA…GVVRYLPAPN (283 aa)) is the tr-type G domain. Residues 17–24 (AHVDAGKT), 88–92 (DTPGH), and 142–145 (NKMD) each bind GTP.

The protein belongs to the TRAFAC class translation factor GTPase superfamily. Classic translation factor GTPase family. EF-G/EF-2 subfamily.

Its subcellular location is the cytoplasm. Its function is as follows. Catalyzes the GTP-dependent ribosomal translocation step during translation elongation. During this step, the ribosome changes from the pre-translocational (PRE) to the post-translocational (POST) state as the newly formed A-site-bound peptidyl-tRNA and P-site-bound deacylated tRNA move to the P and E sites, respectively. Catalyzes the coordinated movement of the two tRNA molecules, the mRNA and conformational changes in the ribosome. The sequence is that of Elongation factor G from Francisella tularensis subsp. mediasiatica (strain FSC147).